The following is a 173-amino-acid chain: Cell division protein SepF (173 aa).

The disordered stretch occupies residues 17–85 (SDDEYISDET…NELRTITTVH (69 aa)). The segment covering 35–52 (SAGGSSAAVSESGSTSVA) has biased composition (low complexity).

The protein belongs to the SepF family. In terms of assembly, homodimer. Interacts with FtsZ.

The protein resides in the cytoplasm. Its function is as follows. Cell division protein that is part of the divisome complex and is recruited early to the Z-ring. Probably stimulates Z-ring formation, perhaps through the cross-linking of FtsZ protofilaments. Its function overlaps with FtsA. This chain is Cell division protein SepF, found in Kocuria rhizophila (strain ATCC 9341 / DSM 348 / NBRC 103217 / DC2201).